The following is a 362-amino-acid chain: sn-glycerol-3-phosphate import ATP-binding protein UgpC (362 aa).

The ABC transporter domain occupies 4–235 (LSFRNVKKTY…PASTFVAGFI (232 aa)). Position 37-44 (37-44 (GPSGCGKS)) interacts with ATP.

This sequence belongs to the ABC transporter superfamily. sn-glycerol-3-phosphate importer (TC 3.A.1.1.3) family. In terms of assembly, the complex is composed of two ATP-binding proteins (UgpC), two transmembrane proteins (UgpA and UgpE) and a solute-binding protein (UgpB).

Its subcellular location is the cell inner membrane. It catalyses the reaction sn-glycerol 3-phosphate(out) + ATP + H2O = sn-glycerol 3-phosphate(in) + ADP + phosphate + H(+). Part of the ABC transporter complex UgpBAEC involved in sn-glycerol-3-phosphate (G3P) import. Responsible for energy coupling to the transport system. The chain is sn-glycerol-3-phosphate import ATP-binding protein UgpC from Bordetella pertussis (strain Tohama I / ATCC BAA-589 / NCTC 13251).